The chain runs to 532 residues: Flavin-containing monooxygenase 3 (532 aa).

FAD contacts are provided by residues glycine 9–serine 13, glutamate 32, leucine 40–tryptophan 41, and asparagine 61–serine 62. NADP(+) is bound by residues threonine 60 to asparagine 61 and serine 195 to aspartate 198. The residue at position 401 (serine 401) is a Phosphoserine. The helical transmembrane segment at phenylalanine 510–glycine 530 threads the bilayer.

This sequence belongs to the FMO family. It depends on FAD as a cofactor. As to expression, liver.

The protein resides in the microsome membrane. Its subcellular location is the endoplasmic reticulum membrane. The catalysed reaction is trimethylamine + NADPH + O2 = trimethylamine N-oxide + NADP(+) + H2O. The enzyme catalyses N,N-dimethylaniline + NADPH + O2 + H(+) = N,N-dimethylaniline N-oxide + NADP(+) + H2O. It carries out the reaction hypotaurine + NADPH + O2 + H(+) = taurine + NADP(+) + H2O. It catalyses the reaction (S)-nicotine + NADPH + O2 = trans-(S)-nicotine N(1')-oxide + NADP(+) + H2O. The catalysed reaction is albendazole + NADPH + O2 + H(+) = albendazole S-oxide + NADP(+) + H2O. Its function is as follows. Essential hepatic enzyme that catalyzes the oxygenation of a wide variety of nitrogen- and sulfur-containing compounds including drugs as well as dietary compounds. Plays an important role in the metabolism of trimethylamine (TMA), via the production of trimethylamine N-oxide (TMAO) metabolite. TMA is generated by the action of gut microbiota using dietary precursors such as choline, choline containing compounds, betaine or L-carnitine. By regulating TMAO concentration, FMO3 directly impacts both platelet responsiveness and rate of thrombus formation. The chain is Flavin-containing monooxygenase 3 (FMO3) from Macaca mulatta (Rhesus macaque).